A 338-amino-acid chain; its full sequence is uncharacterized protein (338 aa).

The N-terminal stretch at 1–29 is a signal peptide; the sequence is MIKQLCKNITICTLALSTTFTVLPATSFA.

The protein belongs to the aerolysin family.

This is an uncharacterized protein from Staphylococcus aureus (strain USA300).